The primary structure comprises 607 residues: Putative pentatricopeptide repeat-containing protein At1g09680 (607 aa).

PPR repeat units follow at residues 239-273 (NVYV…SLQP), 274-308 (TVVS…RTRP), 309-343 (DVFT…GLIP), 344-378 (NDVI…GLQP), 379-413 (DIVL…GLRP), 414-448 (DKIT…GIEL), 449-483 (DRVG…GIKP), 484-518 (DDVT…GHVP), and 519-553 (SVVT…GVVP).

The protein belongs to the PPR family. P subfamily.

This Arabidopsis thaliana (Mouse-ear cress) protein is Putative pentatricopeptide repeat-containing protein At1g09680.